We begin with the raw amino-acid sequence, 524 residues long: Glutamyl-tRNA(Gln) amidotransferase subunit A (524 aa).

Active-site charge relay system residues include Lys109 and Ser184. Ser208 serves as the catalytic Acyl-ester intermediate.

The protein belongs to the amidase family. GatA subfamily. In terms of assembly, heterotrimer of A, B and C subunits.

The catalysed reaction is L-glutamyl-tRNA(Gln) + L-glutamine + ATP + H2O = L-glutaminyl-tRNA(Gln) + L-glutamate + ADP + phosphate + H(+). Its function is as follows. Allows the formation of correctly charged Gln-tRNA(Gln) through the transamidation of misacylated Glu-tRNA(Gln) in organisms which lack glutaminyl-tRNA synthetase. The reaction takes place in the presence of glutamine and ATP through an activated gamma-phospho-Glu-tRNA(Gln). In Tropheryma whipplei (strain TW08/27) (Whipple's bacillus), this protein is Glutamyl-tRNA(Gln) amidotransferase subunit A.